Reading from the N-terminus, the 302-residue chain is MDQYSSSLVDTSLDLTIGVTRMRVEEDPPTSALVEELNRVSAENKKLSEMLTLMCDNYNVLRKQLMEYVNKSNITERDQISPPKKRKSPAREDAFSCAVIGGVSESSSTDQDEYLCKKQREETVVKEKVSRVYYKTEASDTTLVVKDGYQWRKYGQKVTRDNPSPRAYFKCACAPSCSVKKKVQRSVEDQSVLVATYEGEHNHPMPSQIDSNNGLNRHISHGGSASTPVAANRRSSLTVPVTTVDMIESKKVTSPTSRIDFPQVQKLLVEQMASSLTKDPNFTAALAAAVTGKLYQQNHTEK.

The WRKY DNA-binding region spans 140–206 (DTTLVVKDGY…YEGEHNHPMP (67 aa)).

The protein belongs to the WRKY group III family.

It localises to the nucleus. Its function is as follows. Transcription factor. Interacts specifically with the W box (5'-(T)TGAC[CT]-3'), a frequently occurring elicitor-responsive cis-acting element. In Arabidopsis thaliana (Mouse-ear cress), this protein is Probable WRKY transcription factor 40.